A 38-amino-acid chain; its full sequence is Mu-hexatoxin-Mg1b (38 aa).

Disulfide bonds link Cys-1/Cys-15, Cys-8/Cys-20, and Cys-14/Cys-34. The residue at position 38 (Ser-38) is a Serine amide.

This sequence belongs to the neurotoxin 14 (magi-1) family. 09 (magi-1) subfamily. As to expression, expressed by the venom gland.

It is found in the secreted. Functionally, insecticidal neurotoxin. Shows competition for site 3 of insect voltage-gated sodium channels (Nav). This chain is Mu-hexatoxin-Mg1b, found in Macrothele gigas (Japanese funnel web spider).